Here is a 252-residue protein sequence, read N- to C-terminus: UPF0273 protein MK0039 (252 aa).

A KaiC domain is found at 4–248 (ERVSTGIPGM…VFVKERGEVR (245 aa)). 31 to 38 (GGPGTGKT) contributes to the ATP binding site.

Belongs to the UPF0273 family.

The sequence is that of UPF0273 protein MK0039 from Methanopyrus kandleri (strain AV19 / DSM 6324 / JCM 9639 / NBRC 100938).